We begin with the raw amino-acid sequence, 339 residues long: UDP-N-acetylenolpyruvoylglucosamine reductase (339 aa).

The 172-residue stretch at 18 to 189 (GIDVRARLLA…LRVRLRLTRR (172 aa)) folds into the FAD-binding PCMH-type domain. The active site involves Arg-166. The active-site Proton donor is the Ser-239. Glu-335 is a catalytic residue.

The protein belongs to the MurB family. The cofactor is FAD.

It localises to the cytoplasm. The catalysed reaction is UDP-N-acetyl-alpha-D-muramate + NADP(+) = UDP-N-acetyl-3-O-(1-carboxyvinyl)-alpha-D-glucosamine + NADPH + H(+). The protein operates within cell wall biogenesis; peptidoglycan biosynthesis. Its function is as follows. Cell wall formation. The polypeptide is UDP-N-acetylenolpyruvoylglucosamine reductase (Pseudomonas aeruginosa (strain ATCC 15692 / DSM 22644 / CIP 104116 / JCM 14847 / LMG 12228 / 1C / PRS 101 / PAO1)).